The following is a 350-amino-acid chain: Solute carrier family 35 member E4 (350 aa).

Transmembrane regions (helical) follow at residues 40-60 (VLGQPALARVVVAALVWLLAG), 79-99 (PLLLSALHMLAAAVACHWGAQ), 110-130 (VLLLSLTFGTSMACGNVGLST), 135-155 (LAQLATTTTPLFTLALSALLL), 218-238 (VTLLYATSLPSFCLLAGAALV), 258-278 (VLLSCFLSVVYNLASFSLLAL), 279-299 (TSALTVHVLGNLTVVGNLILS), and 301-321 (LLFGSHLSALSYVGIALTLSG). Residues 125 to 179 (NVGLSTVPLDLAQLATTTTPLFTLALSALLLGRRHHPLQFAAMGPLCLGAACSLA) enclose the EamA domain.

Belongs to the TPT transporter family. SLC35E subfamily.

The protein localises to the membrane. In terms of biological role, putative transporter. The chain is Solute carrier family 35 member E4 (Slc35e4) from Rattus norvegicus (Rat).